We begin with the raw amino-acid sequence, 336 residues long: GTPase Obg (336 aa).

The Obg domain occupies 1-159 (MKFLDETKVY…KTIWLRLKLI (159 aa)). In terms of domain architecture, OBG-type G spans 160 to 327 (ADAGLVGLPN…ALRALRSVIA (168 aa)). GTP is bound by residues 166–173 (GLPNAGKS), 191–195 (FTTLH), 212–215 (DIPG), 279–282 (SQID), and 308–310 (SAV). Positions 173 and 193 each coordinate Mg(2+).

This sequence belongs to the TRAFAC class OBG-HflX-like GTPase superfamily. OBG GTPase family. In terms of assembly, monomer. Mg(2+) serves as cofactor.

It is found in the cytoplasm. Functionally, an essential GTPase which binds GTP, GDP and possibly (p)ppGpp with moderate affinity, with high nucleotide exchange rates and a fairly low GTP hydrolysis rate. Plays a role in control of the cell cycle, stress response, ribosome biogenesis and in those bacteria that undergo differentiation, in morphogenesis control. The protein is GTPase Obg of Rhizobium meliloti (strain 1021) (Ensifer meliloti).